The chain runs to 157 residues: Small ribosomal subunit protein uS7c (157 aa).

The protein belongs to the universal ribosomal protein uS7 family. Part of the 30S ribosomal subunit.

It is found in the plastid. The protein localises to the organellar chromatophore. Functionally, one of the primary rRNA binding proteins, it binds directly to 16S rRNA where it nucleates assembly of the head domain of the 30S subunit. The chain is Small ribosomal subunit protein uS7c (rps7) from Paulinella chromatophora.